Here is a 630-residue protein sequence, read N- to C-terminus: tRNA uridine 5-carboxymethylaminomethyl modification enzyme MnmG (630 aa).

13–18 (GGGHAG) contacts FAD. 273–287 (GPRYCPSIEDKVNRF) serves as a coordination point for NAD(+).

Belongs to the MnmG family. As to quaternary structure, homodimer. Heterotetramer of two MnmE and two MnmG subunits. Requires FAD as cofactor.

It localises to the cytoplasm. NAD-binding protein involved in the addition of a carboxymethylaminomethyl (cmnm) group at the wobble position (U34) of certain tRNAs, forming tRNA-cmnm(5)s(2)U34. The sequence is that of tRNA uridine 5-carboxymethylaminomethyl modification enzyme MnmG from Saccharophagus degradans (strain 2-40 / ATCC 43961 / DSM 17024).